The chain runs to 318 residues: Peptidyl-prolyl cis-trans isomerase CPR4 (318 aa).

A signal peptide spans 1–20; it reads MWLKSLLLCLYSLVLCQVHA. A PPIase cyclophilin-type domain is found at 55–225; sequence YFDPVSKSMK…HELRFLYFVL (171 aa). An N-linked (GlcNAc...) asparagine glycan is attached at N166. The helical transmembrane segment at 286 to 303 threads the bilayer; that stretch reads ISRALMCLTVLGLCFIAY.

Its subcellular location is the membrane. The catalysed reaction is [protein]-peptidylproline (omega=180) = [protein]-peptidylproline (omega=0). In terms of biological role, PPIases accelerate the folding of proteins. It catalyzes the cis-trans isomerization of proline imidic peptide bonds in oligopeptides. This Saccharomyces cerevisiae (strain ATCC 204508 / S288c) (Baker's yeast) protein is Peptidyl-prolyl cis-trans isomerase CPR4 (CPR4).